Reading from the N-terminus, the 320-residue chain is Homoserine kinase (320 aa).

100–110 (PLSSGMGSSAA) contributes to the ATP binding site.

The protein belongs to the GHMP kinase family. Homoserine kinase subfamily.

It is found in the cytoplasm. It carries out the reaction L-homoserine + ATP = O-phospho-L-homoserine + ADP + H(+). It participates in amino-acid biosynthesis; L-threonine biosynthesis; L-threonine from L-aspartate: step 4/5. Functionally, catalyzes the ATP-dependent phosphorylation of L-homoserine to L-homoserine phosphate. The protein is Homoserine kinase of Chlorobium phaeobacteroides (strain DSM 266 / SMG 266 / 2430).